The primary structure comprises 337 residues: 4-hydroxythreonine-4-phosphate dehydrogenase (337 aa).

Residues H137 and T138 each contribute to the substrate site. 3 residues coordinate a divalent metal cation: H167, H212, and H267. Residues K275, N284, and R293 each contribute to the substrate site.

This sequence belongs to the PdxA family. As to quaternary structure, homodimer. It depends on Zn(2+) as a cofactor. Requires Mg(2+) as cofactor. Co(2+) serves as cofactor.

The protein localises to the cytoplasm. The enzyme catalyses 4-(phosphooxy)-L-threonine + NAD(+) = 3-amino-2-oxopropyl phosphate + CO2 + NADH. The protein operates within cofactor biosynthesis; pyridoxine 5'-phosphate biosynthesis; pyridoxine 5'-phosphate from D-erythrose 4-phosphate: step 4/5. Its function is as follows. Catalyzes the NAD(P)-dependent oxidation of 4-(phosphooxy)-L-threonine (HTP) into 2-amino-3-oxo-4-(phosphooxy)butyric acid which spontaneously decarboxylates to form 3-amino-2-oxopropyl phosphate (AHAP). This Ectopseudomonas mendocina (strain ymp) (Pseudomonas mendocina) protein is 4-hydroxythreonine-4-phosphate dehydrogenase.